Consider the following 347-residue polypeptide: Phosphoribosylformylglycinamidine cyclo-ligase (347 aa).

The protein belongs to the AIR synthase family.

It is found in the cytoplasm. It catalyses the reaction 2-formamido-N(1)-(5-O-phospho-beta-D-ribosyl)acetamidine + ATP = 5-amino-1-(5-phospho-beta-D-ribosyl)imidazole + ADP + phosphate + H(+). It functions in the pathway purine metabolism; IMP biosynthesis via de novo pathway; 5-amino-1-(5-phospho-D-ribosyl)imidazole from N(2)-formyl-N(1)-(5-phospho-D-ribosyl)glycinamide: step 2/2. The sequence is that of Phosphoribosylformylglycinamidine cyclo-ligase from Prochlorococcus marinus subsp. pastoris (strain CCMP1986 / NIES-2087 / MED4).